The sequence spans 463 residues: NADH dehydrogenase [ubiquinone] iron-sulfur protein 2, mitochondrial (463 aa).

The N-terminal 33 residues, methionine 1–glycine 33, are a transit peptide targeting the mitochondrion. At lysine 62 the chain carries N6-acetyllysine. Symmetric dimethylarginine is present on arginine 118. [4Fe-4S] cluster is bound by residues cysteine 326, cysteine 332, and cysteine 347.

Belongs to the complex I 49 kDa subunit family. As to quaternary structure, core subunit of respiratory chain NADH dehydrogenase (Complex I) which is composed of 45 different subunits. Component of the iron-sulfur (IP) fragment of the enzyme. Interacts with NDUFAF3. Interacts with NDUFAF7. Interacts with CERS2. The cofactor is [4Fe-4S] cluster. Dimethylation at Arg-118 by NDUFAF7 takes place after NDUFS2 assembles into the complex I, leading to stabilize the early intermediate complex.

The protein resides in the mitochondrion inner membrane. The catalysed reaction is a ubiquinone + NADH + 5 H(+)(in) = a ubiquinol + NAD(+) + 4 H(+)(out). Functionally, core subunit of the mitochondrial membrane respiratory chain NADH dehydrogenase (Complex I) which catalyzes electron transfer from NADH through the respiratory chain, using ubiquinone as an electron acceptor. Essential for the catalytic activity and assembly of complex I. Redox-sensitive, critical component of the oxygen-sensing pathway in the pulmonary vasculature which plays a key role in acute pulmonary oxygen-sensing and hypoxic pulmonary vasoconstriction. Plays an important role in carotid body sensing of hypoxia. Essential for glia-like neural stem and progenitor cell proliferation, differentiation and subsequent oligodendrocyte or neuronal maturation. In Mus musculus (Mouse), this protein is NADH dehydrogenase [ubiquinone] iron-sulfur protein 2, mitochondrial (Ndufs2).